The primary structure comprises 37 residues: Large ribosomal subunit protein bL36 (37 aa).

Belongs to the bacterial ribosomal protein bL36 family.

This chain is Large ribosomal subunit protein bL36, found in Desulforudis audaxviator (strain MP104C).